The sequence spans 298 residues: ATP synthase gamma chain (298 aa).

Belongs to the ATPase gamma chain family. F-type ATPases have 2 components, CF(1) - the catalytic core - and CF(0) - the membrane proton channel. CF(1) has five subunits: alpha(3), beta(3), gamma(1), delta(1), epsilon(1). CF(0) has three main subunits: a, b and c.

It is found in the cell inner membrane. Its function is as follows. Produces ATP from ADP in the presence of a proton gradient across the membrane. The gamma chain is believed to be important in regulating ATPase activity and the flow of protons through the CF(0) complex. The sequence is that of ATP synthase gamma chain from Granulibacter bethesdensis (strain ATCC BAA-1260 / CGDNIH1).